A 285-amino-acid chain; its full sequence is MAKIKLKNRKALVVYNKTDFDKNKHFAQALVDELNKKKLVGHILLLDDETADHKHIKNVELIINRSRRIDFLTKHNFLNSFLINPQNIVLVANDKYETYRWLKQHKFLTVDTTIFDPKKIKTFPIVIKKRDSYGGEDVHLIQNAEEIKQLPIQNPNEWIVQPFLSIGKVEYRAYILFGKVLKTIRRTASGDDFRANYSQNAAVDLFKLKWYIKHKIKRIAKKLGHGYYAIDFFLNKYNRIVVNEIEDAAGARALTKMCPDLNLPRVIIKSSLTHFKHHLKRQMIP.

Positions 107–285 constitute an ATP-grasp domain; the sequence is FLTVDTTIFD…KHHLKRQMIP (179 aa).

This is an uncharacterized protein from Mycoplasma pneumoniae (strain ATCC 29342 / M129 / Subtype 1) (Mycoplasmoides pneumoniae).